The following is a 182-amino-acid chain: ATP synthase subunit delta (182 aa).

Belongs to the ATPase delta chain family. In terms of assembly, F-type ATPases have 2 components, F(1) - the catalytic core - and F(0) - the membrane proton channel. F(1) has five subunits: alpha(3), beta(3), gamma(1), delta(1), epsilon(1). F(0) has three main subunits: a(1), b(2) and c(10-14). The alpha and beta chains form an alternating ring which encloses part of the gamma chain. F(1) is attached to F(0) by a central stalk formed by the gamma and epsilon chains, while a peripheral stalk is formed by the delta and b chains.

It is found in the cell inner membrane. Functionally, f(1)F(0) ATP synthase produces ATP from ADP in the presence of a proton or sodium gradient. F-type ATPases consist of two structural domains, F(1) containing the extramembraneous catalytic core and F(0) containing the membrane proton channel, linked together by a central stalk and a peripheral stalk. During catalysis, ATP synthesis in the catalytic domain of F(1) is coupled via a rotary mechanism of the central stalk subunits to proton translocation. In terms of biological role, this protein is part of the stalk that links CF(0) to CF(1). It either transmits conformational changes from CF(0) to CF(1) or is implicated in proton conduction. In Sulfurihydrogenibium sp. (strain YO3AOP1), this protein is ATP synthase subunit delta.